Consider the following 137-residue polypeptide: Large ribosomal subunit protein uL16 (137 aa).

Belongs to the universal ribosomal protein uL16 family. As to quaternary structure, part of the 50S ribosomal subunit.

Binds 23S rRNA and is also seen to make contacts with the A and possibly P site tRNAs. This chain is Large ribosomal subunit protein uL16, found in Bartonella tribocorum (strain CIP 105476 / IBS 506).